Reading from the N-terminus, the 379-residue chain is Probable RNA methyltransferase RB6963 (379 aa).

Glu-89 functions as the Proton acceptor in the catalytic mechanism. One can recognise a Radical SAM core domain in the interval 96–332 (ATGRTTLCVS…VRYSLGNDIE (237 aa)). A disulfide bridge links Cys-103 with Cys-335. 3 residues coordinate [4Fe-4S] cluster: Cys-110, Cys-114, and Cys-117. S-adenosyl-L-methionine contacts are provided by residues 160–161 (GE), Ser-192, 215–217 (SLH), and Asn-291. Cys-335 functions as the S-methylcysteine intermediate in the catalytic mechanism.

This sequence belongs to the radical SAM superfamily. RlmN family. The cofactor is [4Fe-4S] cluster.

It localises to the cytoplasm. This is Probable RNA methyltransferase RB6963 from Rhodopirellula baltica (strain DSM 10527 / NCIMB 13988 / SH1).